Reading from the N-terminus, the 117-residue chain is uncharacterized protein (117 aa).

This sequence belongs to the transposase 34 family.

This is an uncharacterized protein from Sinorhizobium fredii (strain NBRC 101917 / NGR234).